A 304-amino-acid chain; its full sequence is Nicotinamide/nicotinic acid mononucleotide adenylyltransferase 2 (304 aa).

The NAD(+) site is built by serine 16 and phenylalanine 17. An ATP-binding site is contributed by histidine 24. NAD(+) is bound by residues tryptophan 92 and threonine 95. 2 S-palmitoyl cysteine lipidation sites follow: cysteine 161 and cysteine 162. NAD(+) is bound by residues glycine 197, aspartate 199, leucine 209, tryptophan 210, and arginine 229. An ATP-binding site is contributed by 268-271 (TKSR).

Belongs to the eukaryotic NMN adenylyltransferase family. As to quaternary structure, monomer. Mg(2+) is required as a cofactor.

The protein localises to the golgi apparatus membrane. It localises to the cytoplasmic vesicle membrane. The protein resides in the cytoplasm. It is found in the cell projection. Its subcellular location is the axon. The catalysed reaction is beta-nicotinamide D-ribonucleotide + ATP + H(+) = diphosphate + NAD(+). The enzyme catalyses nicotinate beta-D-ribonucleotide + ATP + H(+) = deamido-NAD(+) + diphosphate. Its pathway is cofactor biosynthesis; NAD(+) biosynthesis; NAD(+) from nicotinamide D-ribonucleotide: step 1/1. The protein operates within cofactor biosynthesis; NAD(+) biosynthesis; deamido-NAD(+) from nicotinate D-ribonucleotide: step 1/1. In terms of biological role, nicotinamide/nicotinate-nucleotide adenylyltransferase that acts as an axon maintenance factor. Axon survival factor required for the maintenance of healthy axons: acts by delaying Wallerian axon degeneration, an evolutionarily conserved process that drives the loss of damaged axons. Catalyzes the formation of NAD(+) from nicotinamide mononucleotide (NMN) and ATP. Can also use the deamidated form; nicotinic acid mononucleotide (NaMN) as substrate but with a lower efficiency. Also catalyzes the reverse reaction, i.e. the pyrophosphorolytic cleavage of NAD(+). For the pyrophosphorolytic activity prefers NAD(+), NADH and NaAD as substrates and degrades nicotinic acid adenine dinucleotide phosphate (NHD) less effectively. Also acts as an activator of ADP-ribosylation by supporting the catalytic activity of PARP16 and promoting mono-ADP-ribosylation of ribosomes by PARP16. May be involved in the maintenance of axonal integrity. This is Nicotinamide/nicotinic acid mononucleotide adenylyltransferase 2 (nmnat2) from Danio rerio (Zebrafish).